The following is a 355-amino-acid chain: Neurogenic differentiation factor 1 (355 aa).

Positions 1-93 are disordered; the sequence is MTKSYSESGL…GPKKKKMTKA (93 aa). Positions 58–77 are enriched in acidic residues; the sequence is DEEDEDEDLEEEDEEEEEDD. Residues 80–92 are compositionally biased toward basic residues; the sequence is PKRRGPKKKKMTK. The Nuclear localization signal signature appears at 86 to 92; sequence KKKKMTK. In terms of domain architecture, bHLH spans 100–152; it reads LRRMKANARERNRMHGLNAALDNLRKVVPCYSKTQKLSKIETLRLAKNYIWAL. Phosphoserine is present on residues S161, S258, S265, and S273. S334 is subject to Phosphoserine; by CaMK2.

As to quaternary structure, efficient DNA-binding requires dimerization with another bHLH protein. Heterodimer with TCF3/E47; the heterodimer is inhibited in presence of ID2, but not NR0B2, to E-box element. Interacts with EP300; the interaction is inhibited by NR0B2. Interacts with RREB1. Interacts with ATOH8. Post-translationally, phosphorylated. In islet cells, phosphorylated on Ser-273 upon glucose stimulation; which may be required for nuclear localization. In activated neurons, phosphorylated on Ser-334; which promotes dendritic growth. Phosphorylated by MAPK1; phosphorylation regulates heterodimerization and DNA-binding activities. Phosphorylation on Ser-265 and Ser-273 increases transactivation on the insulin promoter in glucose-stimulated insulinoma cells. Most abundant in pancreatic alpha- and beta-cells, less in brain and intestine.

The protein resides in the cytoplasm. Its subcellular location is the nucleus. Acts as a transcriptional activator: mediates transcriptional activation by binding to E box-containing promoter consensus core sequences 5'-CANNTG-3'. Associates with the p300/CBP transcription coactivator complex to stimulate transcription of the secretin gene as well as the gene encoding the cyclin-dependent kinase inhibitor CDKN1A. Contributes to the regulation of several cell differentiation pathways, like those that promote the formation of early retinal ganglion cells, inner ear sensory neurons, granule cells forming either the cerebellum or the dentate gyrus cell layer of the hippocampus, endocrine islet cells of the pancreas and enteroendocrine cells of the small intestine. Together with PAX6 or SIX3, is required for the regulation of amacrine cell fate specification. Also required for dendrite morphogenesis and maintenance in the cerebellar cortex. Associates with chromatin to enhancer regulatory elements in genes encoding key transcriptional regulators of neurogenesis. This is Neurogenic differentiation factor 1 (NEUROD1) from Mesocricetus auratus (Golden hamster).